Reading from the N-terminus, the 243-residue chain is Biosynthetic peptidoglycan transglycosylase (243 aa).

The helical transmembrane segment at 22-42 (LIVLLVLALMSVLQVIVFRFV) threads the bilayer.

It belongs to the glycosyltransferase 51 family.

The protein localises to the cell inner membrane. The catalysed reaction is [GlcNAc-(1-&gt;4)-Mur2Ac(oyl-L-Ala-gamma-D-Glu-L-Lys-D-Ala-D-Ala)](n)-di-trans,octa-cis-undecaprenyl diphosphate + beta-D-GlcNAc-(1-&gt;4)-Mur2Ac(oyl-L-Ala-gamma-D-Glu-L-Lys-D-Ala-D-Ala)-di-trans,octa-cis-undecaprenyl diphosphate = [GlcNAc-(1-&gt;4)-Mur2Ac(oyl-L-Ala-gamma-D-Glu-L-Lys-D-Ala-D-Ala)](n+1)-di-trans,octa-cis-undecaprenyl diphosphate + di-trans,octa-cis-undecaprenyl diphosphate + H(+). Its pathway is cell wall biogenesis; peptidoglycan biosynthesis. In terms of biological role, peptidoglycan polymerase that catalyzes glycan chain elongation from lipid-linked precursors. This Xylella fastidiosa (strain 9a5c) protein is Biosynthetic peptidoglycan transglycosylase.